A 573-amino-acid chain; its full sequence is Phosphomethylpyrimidine synthase (573 aa).

Residues Asn-190, Met-219, Tyr-248, His-284, 304–306 (SRG), 345–348 (DGLR), and Glu-384 each bind substrate. Residue His-388 coordinates Zn(2+). Tyr-411 provides a ligand contact to substrate. His-452 is a Zn(2+) binding site. [4Fe-4S] cluster contacts are provided by Cys-532, Cys-535, and Cys-540.

The protein belongs to the ThiC family. [4Fe-4S] cluster serves as cofactor.

It catalyses the reaction 5-amino-1-(5-phospho-beta-D-ribosyl)imidazole + S-adenosyl-L-methionine = 4-amino-2-methyl-5-(phosphooxymethyl)pyrimidine + CO + 5'-deoxyadenosine + formate + L-methionine + 3 H(+). The protein operates within cofactor biosynthesis; thiamine diphosphate biosynthesis. Functionally, catalyzes the synthesis of the hydroxymethylpyrimidine phosphate (HMP-P) moiety of thiamine from aminoimidazole ribotide (AIR) in a radical S-adenosyl-L-methionine (SAM)-dependent reaction. This Geobacillus sp. (strain WCH70) protein is Phosphomethylpyrimidine synthase.